Consider the following 498-residue polypeptide: ATP synthase subunit beta, chloroplastic (498 aa).

172–179 (GGAGVGKT) contributes to the ATP binding site.

It belongs to the ATPase alpha/beta chains family. F-type ATPases have 2 components, CF(1) - the catalytic core - and CF(0) - the membrane proton channel. CF(1) has five subunits: alpha(3), beta(3), gamma(1), delta(1), epsilon(1). CF(0) has four main subunits: a(1), b(1), b'(1) and c(9-12).

It is found in the plastid. The protein localises to the chloroplast thylakoid membrane. The catalysed reaction is ATP + H2O + 4 H(+)(in) = ADP + phosphate + 5 H(+)(out). Produces ATP from ADP in the presence of a proton gradient across the membrane. The catalytic sites are hosted primarily by the beta subunits. In Nicotiana tabacum (Common tobacco), this protein is ATP synthase subunit beta, chloroplastic.